Reading from the N-terminus, the 130-residue chain is Small ribosomal subunit protein uS9 (130 aa).

This sequence belongs to the universal ribosomal protein uS9 family.

The chain is Small ribosomal subunit protein uS9 from Nitrosomonas eutropha (strain DSM 101675 / C91 / Nm57).